The following is a 403-amino-acid chain: Dual-specificity RNA methyltransferase RlmN (403 aa).

The Proton acceptor role is filled by E121. The Radical SAM core domain maps to E127 to L375. A disulfide bridge connects residues C134 and C378. Residues C141, C145, and C148 each contribute to the [4Fe-4S] cluster site. S-adenosyl-L-methionine-binding positions include G204 to E205, S236, S258 to H260, and N335. The active-site S-methylcysteine intermediate is the C378.

This sequence belongs to the radical SAM superfamily. RlmN family. The cofactor is [4Fe-4S] cluster.

The protein resides in the cytoplasm. It catalyses the reaction adenosine(2503) in 23S rRNA + 2 reduced [2Fe-2S]-[ferredoxin] + 2 S-adenosyl-L-methionine = 2-methyladenosine(2503) in 23S rRNA + 5'-deoxyadenosine + L-methionine + 2 oxidized [2Fe-2S]-[ferredoxin] + S-adenosyl-L-homocysteine. The catalysed reaction is adenosine(37) in tRNA + 2 reduced [2Fe-2S]-[ferredoxin] + 2 S-adenosyl-L-methionine = 2-methyladenosine(37) in tRNA + 5'-deoxyadenosine + L-methionine + 2 oxidized [2Fe-2S]-[ferredoxin] + S-adenosyl-L-homocysteine. Specifically methylates position 2 of adenine 2503 in 23S rRNA and position 2 of adenine 37 in tRNAs. m2A2503 modification seems to play a crucial role in the proofreading step occurring at the peptidyl transferase center and thus would serve to optimize ribosomal fidelity. The polypeptide is Dual-specificity RNA methyltransferase RlmN (Rhodopseudomonas palustris (strain BisA53)).